The following is a 164-amino-acid chain: MASIAVCPGSFDPVTYGHLDIIKRGAKVFDQVYVAVLNNSSKKPLFTVEERMELLREVTRTLDNVHVESFHGLLVDYARSKKANAILRGLRAVSDFEYEMQITSMNRVLDENIETFFMMTNSQYAFLSSSIVKEVAKYNGDISELVPPVVEAALKRKFASAVAD.

S10 contributes to the substrate binding site. ATP contacts are provided by residues 10–11 and H18; that span reads SF. Substrate is bound by residues K42, L74, and R88. ATP is bound by residues 89 to 91, E99, and 124 to 130; these read GLR and YAFLSSS.

Belongs to the bacterial CoaD family. As to quaternary structure, homohexamer. Requires Mg(2+) as cofactor.

The protein localises to the cytoplasm. The catalysed reaction is (R)-4'-phosphopantetheine + ATP + H(+) = 3'-dephospho-CoA + diphosphate. It participates in cofactor biosynthesis; coenzyme A biosynthesis; CoA from (R)-pantothenate: step 4/5. Reversibly transfers an adenylyl group from ATP to 4'-phosphopantetheine, yielding dephospho-CoA (dPCoA) and pyrophosphate. This Geobacillus thermodenitrificans (strain NG80-2) protein is Phosphopantetheine adenylyltransferase.